Here is a 545-residue protein sequence, read N- to C-terminus: MAELTINADDVRNALNEFAASYEPGNAERVEVGRVTTASDGIARVEGLPSVMANELLRFEDGTLGLAQNLDVREIGVIILGDFTGIEEGQEVHRTGEILSVPVGDAFLGRVVDPLGQPIDDLGEIKAEATRALELQAPGVTERKSVHEPMQTGLKAIDAMIPIGRGQRQLIIGDRQTGKTAIAVDTIINQKANWASGDVTKQVRCVYVGVGQKASTIAAVRQTLEDHGALEYTTIVASPASDPAGFKYLAPYAGSAIGQHWMYGGKHVLVIFDDLSKQAEAYRAVSLLLRRPPGREAYPGDVFYLHSRLLERCAKLSDELGAGSMTGLPIVETKANDVSAYIPTNVISITDGQIFLQSDLFNANQRPAVDVGVSVSRVGGAAQVKSMKKVSGTLKLDLAQYRDMQAFAMFASDLDAASRQQLTRGARLMELLKQGQYSPFPVENQVVSIWAGTNGYLDDVPVEDISRFESEFLEHLTHKSSILTTLAQTNVLDDDTAAALKEAIVSFKKGFFGEGDNHLVGAGHEEHAAISGGDVDQEKIVKQKR.

173-180 provides a ligand contact to ATP; the sequence is GDRQTGKT.

This sequence belongs to the ATPase alpha/beta chains family. F-type ATPases have 2 components, CF(1) - the catalytic core - and CF(0) - the membrane proton channel. CF(1) has five subunits: alpha(3), beta(3), gamma(1), delta(1), epsilon(1). CF(0) has three main subunits: a(1), b(2) and c(9-12). The alpha and beta chains form an alternating ring which encloses part of the gamma chain. CF(1) is attached to CF(0) by a central stalk formed by the gamma and epsilon chains, while a peripheral stalk is formed by the delta and b chains.

It localises to the cell membrane. The catalysed reaction is ATP + H2O + 4 H(+)(in) = ADP + phosphate + 5 H(+)(out). Produces ATP from ADP in the presence of a proton gradient across the membrane. The alpha chain is a regulatory subunit. The polypeptide is ATP synthase subunit alpha (Paenarthrobacter aurescens (strain TC1)).